Reading from the N-terminus, the 217-residue chain is Protein canopy 4 (217 aa).

The N-terminal stretch at 1 to 27 (MEMFTVFLFYMFSLVLANQEERLPNKC) is a signal peptide. 3 cysteine pairs are disulfide-bonded: Cys27-Cys185, Cys30-Cys173, and Cys83-Cys145. Positions 194–217 (MGMKGSEEESEGKDGKETHDAGEL) are disordered. The segment covering 205–217 (GKDGKETHDAGEL) has biased composition (basic and acidic residues).

This sequence belongs to the canopy family.

The protein resides in the secreted. The polypeptide is Protein canopy 4 (cnpy4) (Danio rerio (Zebrafish)).